We begin with the raw amino-acid sequence, 536 residues long: CTP synthase (536 aa).

The tract at residues Met-1–Leu-267 is amidoligase domain. Residue Ser-13 coordinates CTP. Ser-13 is a UTP binding site. ATP contacts are provided by residues Ser-14 to Ile-19 and Asp-71. Mg(2+)-binding residues include Asp-71 and Glu-141. CTP is bound by residues Asp-148–Glu-150, Lys-188–Gln-193, and Lys-224. UTP-binding positions include Lys-188–Gln-193 and Lys-224. The Glutamine amidotransferase type-1 domain maps to Lys-292–Gln-534. Gly-354 is a binding site for L-glutamine. Catalysis depends on Cys-381, which acts as the Nucleophile; for glutamine hydrolysis. L-glutamine contacts are provided by residues Leu-382–Gln-385, Glu-405, and Arg-462. Residues His-507 and Glu-509 contribute to the active site.

This sequence belongs to the CTP synthase family. Homotetramer.

The enzyme catalyses UTP + L-glutamine + ATP + H2O = CTP + L-glutamate + ADP + phosphate + 2 H(+). It carries out the reaction L-glutamine + H2O = L-glutamate + NH4(+). The catalysed reaction is UTP + NH4(+) + ATP = CTP + ADP + phosphate + 2 H(+). It participates in pyrimidine metabolism; CTP biosynthesis via de novo pathway; CTP from UDP: step 2/2. Its activity is regulated as follows. Allosterically activated by GTP, when glutamine is the substrate; GTP has no effect on the reaction when ammonia is the substrate. The allosteric effector GTP functions by stabilizing the protein conformation that binds the tetrahedral intermediate(s) formed during glutamine hydrolysis. Inhibited by the product CTP, via allosteric rather than competitive inhibition. Functionally, catalyzes the ATP-dependent amination of UTP to CTP with either L-glutamine or ammonia as the source of nitrogen. Regulates intracellular CTP levels through interactions with the four ribonucleotide triphosphates. This chain is CTP synthase, found in Prochlorococcus marinus (strain AS9601).